Here is a 465-residue protein sequence, read N- to C-terminus: VGFKAGVKDYKLTYYTPEYVTKDTDILAAFRVTPQPGVPPEEAGAAVAAESSTGTWTTVWTDGLTSLDRYKGRCYNIEPVAGEENQYICYVAYPLDLFEEGSVTNMFTSIVGNVFGFKALRALRLEDLRIPPEYSKTFQGPLHGIQVERDKLNKYGRPLLGCTIKPKLGLSAKNYGRAVYECLRGGLDFTKDDENVNSQPFMRWRDRFLFCAEAIYKSQAETGEIKGHYLNATAGTCEEMIKRAVFARELGVPIVMHDYLTGGFTANTSLAHYCRDNGLLLHIHRAMHAVIDRQKNHGMHFRVLAKALRLSGGDHIHAGTVVGKLEGERDITLGFVDLLRDDFIEKDRSRGIYFTQDWVSLPGVLPVASGGIHVWHMPALTEIFGDDSVLQFGGGTLGHPWGNAPGAVANRVALEACVQARNEGRDLAREGNEIIREASKWSPELAAACEVWKEIKFEFPAMDTL.

Lys4 bears the N6,N6,N6-trimethyllysine mark. Substrate contacts are provided by Asn113 and Thr163. Lys165 (proton acceptor) is an active-site residue. Residue Lys167 participates in substrate binding. 3 residues coordinate Mg(2+): Lys191, Asp193, and Glu194. Lys191 bears the N6-carboxylysine mark. His284 acts as the Proton acceptor in catalysis. Arg285, His317, and Ser369 together coordinate substrate.

This sequence belongs to the RuBisCO large chain family. Type I subfamily. As to quaternary structure, heterohexadecamer of 8 large chains and 8 small chains; disulfide-linked. The disulfide link is formed within the large subunit homodimers. Mg(2+) is required as a cofactor. The disulfide bond which can form in the large chain dimeric partners within the hexadecamer appears to be associated with oxidative stress and protein turnover.

The protein localises to the plastid. The protein resides in the chloroplast. The enzyme catalyses 2 (2R)-3-phosphoglycerate + 2 H(+) = D-ribulose 1,5-bisphosphate + CO2 + H2O. It catalyses the reaction D-ribulose 1,5-bisphosphate + O2 = 2-phosphoglycolate + (2R)-3-phosphoglycerate + 2 H(+). Functionally, ruBisCO catalyzes two reactions: the carboxylation of D-ribulose 1,5-bisphosphate, the primary event in carbon dioxide fixation, as well as the oxidative fragmentation of the pentose substrate in the photorespiration process. Both reactions occur simultaneously and in competition at the same active site. This is Ribulose bisphosphate carboxylase large chain from Ailanthus altissima (Tree-of-heaven).